We begin with the raw amino-acid sequence, 993 residues long: Protein translocase subunit SecA (993 aa).

ATP-binding positions include Q102, 120–124 (GEGKT), and D523. The tract at residues 910 to 962 (ENAPEPQISGGNGQQPPQRRQQTSLDDLEKQFERKKKRELEQARMAGGGMPDA) is disordered. Over residues 936–951 (DLEKQFERKKKRELEQ) the composition is skewed to basic and acidic residues. 4 residues coordinate Zn(2+): C979, C981, C990, and H991.

This sequence belongs to the SecA family. In terms of assembly, monomer and homodimer. Part of the essential Sec protein translocation apparatus which comprises SecA, SecYEG and auxiliary proteins SecDF. Other proteins may also be involved. Zn(2+) serves as cofactor.

It is found in the cell inner membrane. The protein resides in the cytoplasm. The catalysed reaction is ATP + H2O + cellular proteinSide 1 = ADP + phosphate + cellular proteinSide 2.. Part of the Sec protein translocase complex. Interacts with the SecYEG preprotein conducting channel. Has a central role in coupling the hydrolysis of ATP to the transfer of proteins into and across the cell membrane, serving as an ATP-driven molecular motor driving the stepwise translocation of polypeptide chains across the membrane. The sequence is that of Protein translocase subunit SecA from Koribacter versatilis (strain Ellin345).